The following is a 334-amino-acid chain: Ornithine carbamoyltransferase (334 aa).

Residues 56–59 (STRT), Gln83, Arg107, and 134–137 (HPTQ) contribute to the carbamoyl phosphate site. L-ornithine is bound by residues Asn168, Asp232, and 236 to 237 (SM). Carbamoyl phosphate is bound by residues 274-275 (CL) and Arg320.

It belongs to the aspartate/ornithine carbamoyltransferase superfamily. OTCase family.

Its subcellular location is the cytoplasm. It carries out the reaction carbamoyl phosphate + L-ornithine = L-citrulline + phosphate + H(+). It functions in the pathway amino-acid biosynthesis; L-arginine biosynthesis; L-arginine from L-ornithine and carbamoyl phosphate: step 1/3. In terms of biological role, reversibly catalyzes the transfer of the carbamoyl group from carbamoyl phosphate (CP) to the N(epsilon) atom of ornithine (ORN) to produce L-citrulline. This chain is Ornithine carbamoyltransferase, found in Escherichia coli (strain 55989 / EAEC).